Consider the following 383-residue polypeptide: Prokineticin receptor 2 (383 aa).

Topologically, residues Met-1 to Ile-54 are extracellular. 2 N-linked (GlcNAc...) asparagine glycosylation sites follow: Asn-7 and Asn-27. Residues Val-55 to Ile-75 traverse the membrane as a helical segment. The Cytoplasmic portion of the chain corresponds to Ala-76–Asn-89. The helical transmembrane segment at Leu-90–Glu-110 threads the bilayer. Residues Met-111–Thr-136 lie on the Extracellular side of the membrane. Cys-128 and Cys-207 are disulfide-bonded. Residues Val-137–Ile-157 form a helical membrane-spanning segment. The Cytoplasmic segment spans residues Val-158–Ser-170. Residues Phe-171–Thr-191 traverse the membrane as a helical segment. At Thr-192–Tyr-222 the chain is on the extracellular side. A helical membrane pass occupies residues Phe-223–Ala-243. Residues Arg-244–Thr-272 are Cytoplasmic-facing. The chain crosses the membrane as a helical span at residues Val-273–Phe-293. Topologically, residues Thr-294–Thr-312 are extracellular. The chain crosses the membrane as a helical span at residues Ala-313 to Val-333. The Cytoplasmic segment spans residues Thr-334 to Lys-383.

Belongs to the G-protein coupled receptor 1 family. Homodimer. In terms of tissue distribution, abundantly expressed in the CNS and reproductive organs with the highest levels in the cerebrum, cerebellum, testis and ovary.

The protein resides in the cell membrane. In terms of biological role, receptor for prokineticin 2. Exclusively coupled to the G(q) subclass of heteromeric G proteins. Activation leads to mobilization of calcium, stimulation of phosphoinositide turnover and activation of p44/p42 mitogen-activated protein kinase. This chain is Prokineticin receptor 2 (Prokr2), found in Rattus norvegicus (Rat).